We begin with the raw amino-acid sequence, 506 residues long: Zinc finger and SCAN domain containing protein 4D (506 aa).

The region spanning 37–119 (SAQLNFSPSN…RFMESLTDEC (83 aa)) is the SCAN box domain. Residues 238–264 (SQGNSSHHVDFRSAPTPADVPMEEQPK) form a disordered region. 4 consecutive C2H2-type zinc fingers follow at residues 395-417 (FKCEECSRMFKHARSLSSHQRTH), 424-446 (LLCVTCQKMFKRVSDRRTHEIIH), 452-474 (FKCSTCEKSFSHKTNLKSHEMIH), and 480-503 (YVCSLCSRRFRQSSTYHRHLRNYH).

As to expression, highly expressed at the 2-cell stage but its expression is rapidly turned off.

It localises to the nucleus. Its subcellular location is the chromosome. The protein localises to the telomere. Functionally, transcription factor required to regulate early development. Binds telomeres and plays a key role in genomic stability by regulating telomere elongation. Acts as an activator of spontaneous telomere sister chromatid exchange (T-SCE) and telomere elongation. This is Zinc finger and SCAN domain containing protein 4D (Zscan4d) from Mus musculus (Mouse).